Reading from the N-terminus, the 378-residue chain is Putative aminoglycoside phosphotransferase (378 aa).

ATP-binding positions include R79 and 134-136 (DYV). The active-site Proton acceptor is the D249. Positions 254, 267, and 269 each coordinate Mg(2+).

The protein belongs to the aminoglycoside phosphotransferase family.

In terms of biological role, might catalyze the phosphorylation of aminoglycosides and confer aminoglycoside antibiotics resistance. This Mycobacterium tuberculosis (strain CDC 1551 / Oshkosh) protein is Putative aminoglycoside phosphotransferase.